The primary structure comprises 938 residues: Histone deacetylase 7 (938 aa).

The tract at residues 1–40 (MHSPGAGCPALQPDTPGSQPQPMDLRVGQRPTVEPPPEPA) is disordered. The tract at residues 1–121 (MHSPGAGCPA…LAEVILKKQQ (121 aa)) is interaction with MEF2C. Transcription repression regions lie at residues 2–254 (HSPG…DGDR) and 241–533 (GPNP…EHAG). Residues 72–172 (SMDPPMPELQ…LPTEPPEHFP (101 aa)) are interaction with MEF2A. Position 132 is a phosphoserine (Ser-132). 4 disordered regions span residues 155-280 (SFLP…HHGL), 331-361 (SGSG…APLQ), 373-463 (LIKP…DSVL), and 472-491 (RPLS…LSPE). Ser-178 is modified (phosphoserine; by MARK2, MARK3 and PKD/PRKD1). Residues 190 to 204 (KSLERRKNPLLRKES) are compositionally biased toward basic and acidic residues. Phosphoserine; by PKD/PRKD2 is present on Ser-204. Residues 220–235 (SSPSSSSTPASGCSSP) show a composition bias toward low complexity. Ser-344 bears the Phosphoserine; by PKD/PRKD1 mark. A phosphoserine mark is found at Ser-350 and Ser-398. The span at 350–361 (SATASPLLAPLQ) shows a compositional bias: low complexity. Low complexity-rich tracts occupy residues 429-448 (GRGS…EQQH) and 479-491 (SSPA…LSPE). Ser-479 bears the Phosphoserine; by PKD/PRKD1 mark. Ser-480 carries the post-translational modification Phosphoserine. The tract at residues 505–852 (PATGLVYDSV…VAALLGNKVD (348 aa)) is histone deacetylase. 3 residues coordinate Zn(2+): Cys-520, Cys-522, and His-528. Phosphoserine is present on Ser-582. Cys-605 lines the Zn(2+) pocket. His-657 is a catalytic residue. Positions 864-938 (NLSAIRSLEA…LVEEEEPMNL (75 aa)) are interaction with SIN3A. The short motif at 904 to 938 (AEVEAVTALASLSVGILAEDRPSERLVEEEEPMNL) is the Nuclear export signal element.

Belongs to the histone deacetylase family. HD type 2 subfamily. In terms of assembly, interacts with HDAC1, HDAC2, HDAC3, HDAC4, HDAC5, NCOR1, NCOR2, SIN3A, SIN3B, RBBP4, RBBP7, MTA1L1, SAP30 and MBD3. Interacts with KAT5 and EDNRA. Interacts with the 14-3-3 protein YWHAE, MEF2A, MEF2B and MEF2C. Interacts with ZMYND15. Interacts with KDM5B. Interacts with PML. Interacts with FOXP3. Interacts with RARA. Post-translationally, may be phosphorylated by CaMK1. Phosphorylated by the PKC kinases PKN1 and PKN2, impairing nuclear import. Phosphorylation at Ser-178 by MARK2, MARK3 and PRKD1 promotes interaction with 14-3-3 proteins and export from the nucleus. Phosphorylation at Ser-178 is a prerequisite for phosphorylation at Ser-204. In terms of tissue distribution, highly expressed in heart and lung. Expressed at intermediate level in muscle.

The protein localises to the nucleus. It is found in the cytoplasm. It catalyses the reaction N(6)-acetyl-L-lysyl-[histone] + H2O = L-lysyl-[histone] + acetate. The enzyme catalyses N(6)-acetyl-L-lysyl-[protein] + H2O = L-lysyl-[protein] + acetate. Its activity is inhibited by Trichostatin A (TSA), a known histone deacetylase inhibitor. In terms of biological role, responsible for the deacetylation of lysine residues on the N-terminal part of the core histones (H2A, H2B, H3 and H4). Histone deacetylation gives a tag for epigenetic repression and plays an important role in transcriptional regulation, cell cycle progression and developmental events. Histone deacetylases act via the formation of large multiprotein complexes. Involved in muscle maturation by repressing transcription of myocyte enhancer factors such as MEF2A, MEF2B and MEF2C. During muscle differentiation, it shuttles into the cytoplasm, allowing the expression of myocyte enhancer factors. Positively regulates the transcriptional repressor activity of FOXP3. Serves as a corepressor of RARA, causing its deacetylation and inhibition of RARE DNA element binding. In association with RARA, plays a role in the repression of microRNA-10a and thereby in the inflammatory response. Also acetylates non-histone proteins, such as ALKBH5. The polypeptide is Histone deacetylase 7 (Hdac7) (Mus musculus (Mouse)).